The chain runs to 229 residues: Ribonuclease 3 (229 aa).

The RNase III domain occupies 4–133; it reads WEELQESVGF…FIGALYLDNG (130 aa). Glutamate 46 provides a ligand contact to Mg(2+). The active site involves aspartate 50. Mg(2+)-binding residues include aspartate 119 and glutamate 122. Glutamate 122 is an active-site residue. The region spanning 159 to 228 is the DRBM domain; that stretch reads DYKTQLQEIV…AQFAINQLTH (70 aa).

This sequence belongs to the ribonuclease III family. As to quaternary structure, homodimer. The cofactor is Mg(2+).

It localises to the cytoplasm. It catalyses the reaction Endonucleolytic cleavage to 5'-phosphomonoester.. Functionally, digests double-stranded RNA. Involved in the processing of primary rRNA transcript to yield the immediate precursors to the large and small rRNAs (23S and 16S). Processes some mRNAs, and tRNAs when they are encoded in the rRNA operon. Processes pre-crRNA and tracrRNA of type II CRISPR loci if present in the organism. The sequence is that of Ribonuclease 3 from Listeria monocytogenes serotype 4b (strain CLIP80459).